The sequence spans 241 residues: Zinc finger CCHC domain-containing protein 17 (241 aa).

Residues 16–88 (YTIFQGEVAM…DRIKVSLSMK (73 aa)) enclose the S1 motif domain. Ser114 bears the Phosphoserine mark. The CCHC-type zinc finger occupies 131–148 (TTCKKCGCKGHFAKDCFM). Lys144 carries the post-translational modification N6-acetyllysine. The segment at 161–241 (EEEEKEEAKS…KKKHKKKHKE (81 aa)) is disordered. Basic and acidic residues predominate over residues 166-178 (EEAKSAEFEKPDP). A compositionally biased stretch (basic residues) spans 182–198 (PSRKRKKEKKKKKHRDR). At Ser183 the chain carries Phosphoserine. The segment covering 211–225 (DTGKRARHTSKDSKA) has biased composition (basic and acidic residues). The segment covering 226-241 (AKKKKKKKKHKKKHKE) has biased composition (basic residues).

Interacts with PNN. Associates with the 60S ribosomal subunit.

It localises to the nucleus. It is found in the nucleolus. The chain is Zinc finger CCHC domain-containing protein 17 (ZCCHC17) from Homo sapiens (Human).